We begin with the raw amino-acid sequence, 132 residues long: Small ribosomal subunit protein bS6 (132 aa).

The tract at residues 94-132 (DAVTEESQLAKNADEKRARKATTRRPDRDDSDDNDHSED) is disordered. Residues 122-132 (DDSDDNDHSED) show a composition bias toward acidic residues.

Belongs to the bacterial ribosomal protein bS6 family.

Functionally, binds together with bS18 to 16S ribosomal RNA. This is Small ribosomal subunit protein bS6 from Psychrobacter arcticus (strain DSM 17307 / VKM B-2377 / 273-4).